Here is a 240-residue protein sequence, read N- to C-terminus: Putative glycyl-radical enzyme activating enzyme MJ1227 (240 aa).

The 219-residue stretch at 14–232 (IDYPKKASAV…KKYIDNVVIR (219 aa)) folds into the Radical SAM core domain. [4Fe-4S] cluster contacts are provided by cysteine 29, cysteine 33, and cysteine 36. Residues 35–37 (YCH), glycine 71, and 126–128 (FDK) contribute to the S-adenosyl-L-methionine site.

Belongs to the organic radical-activating enzymes family. [4Fe-4S] cluster serves as cofactor.

It carries out the reaction glycyl-[protein] + reduced [flavodoxin] + S-adenosyl-L-methionine = glycin-2-yl radical-[protein] + semiquinone [flavodoxin] + 5'-deoxyadenosine + L-methionine + H(+). The protein is Putative glycyl-radical enzyme activating enzyme MJ1227 of Methanocaldococcus jannaschii (strain ATCC 43067 / DSM 2661 / JAL-1 / JCM 10045 / NBRC 100440) (Methanococcus jannaschii).